A 177-amino-acid polypeptide reads, in one-letter code: Transcription antitermination protein NusB (177 aa).

The tract at residues 1–36 is disordered; the sequence is MTEQPTKPTGSRPPRQPRTGLTSTGARKAGSKSDRS.

The protein belongs to the NusB family.

In terms of biological role, involved in transcription antitermination. Required for transcription of ribosomal RNA (rRNA) genes. Binds specifically to the boxA antiterminator sequence of the ribosomal RNA (rrn) operons. The chain is Transcription antitermination protein NusB from Albidiferax ferrireducens (strain ATCC BAA-621 / DSM 15236 / T118) (Rhodoferax ferrireducens).